We begin with the raw amino-acid sequence, 267 residues long: Transcription factor HES-1 (267 aa).

A disordered region spans residues 1-45; it reads MPADLMEKNSSSPVAATPASMSNTPDKPKTASEHRKSSKPIMEKR. Residues 8 to 25 are compositionally biased toward polar residues; the sequence is KNSSSPVAATPASMSNTP. Over residues 26-35 the composition is skewed to basic and acidic residues; the sequence is DKPKTASEHR. The region spanning 34–91 is the bHLH domain; sequence HRKSSKPIMEKRRRARINESLGQLKTLILDALKKDSSRHSKLEKADILEMTVKHLRNL. In terms of domain architecture, Orange spans 110–143; it reads YRAGFSECMNEVTRFLSTCEGVNTDVRTRLLGHL. A WRPW motif motif is present at residues 264-267; it reads WRPW.

In terms of assembly, transcription repression requires formation of a complex with a corepressor protein of the Groucho/TLE family. Interacts with the bHLH protein hes2, and binds DNA in the form of a heterodimer with the bHLH protein hey1/hrt1. Interacts with the bHLH protein hes6; this interaction may inhibit the transcriptional repressor activity.

The protein localises to the nucleus. Transcriptional repressor of a subset of early mesodermal genes including myod1 and t/bra. Binds DNA on N-box motifs: 5'-CACNAG-3'. Acts as a negative regulator of myogenesis, mediating Notch signaling to repress expression of myod1. The protein is Transcription factor HES-1 of Xenopus tropicalis (Western clawed frog).